The primary structure comprises 310 residues: Pantothenate kinase (310 aa).

Residue Gly95–Ser102 participates in ATP binding.

This sequence belongs to the prokaryotic pantothenate kinase family.

It localises to the cytoplasm. It catalyses the reaction (R)-pantothenate + ATP = (R)-4'-phosphopantothenate + ADP + H(+). It participates in cofactor biosynthesis; coenzyme A biosynthesis; CoA from (R)-pantothenate: step 1/5. This Rhodococcus erythropolis (strain PR4 / NBRC 100887) protein is Pantothenate kinase.